We begin with the raw amino-acid sequence, 376 residues long: Inactive 2'-5'-oligoadenylate synthase 1B (376 aa).

Residues 1–351 (MEQDLRSIPA…VPTEVGVPMK (351 aa)) lie on the Cytoplasmic side of the membrane. A helical; Anchor for type IV membrane protein transmembrane segment spans residues 352–370 (YLLCRIFWLLFWSLFHFIF). Topologically, residues 371–376 (GKTSSG) are extracellular.

Belongs to the 2-5A synthase family. Interacts with OSBPL1A and ABCF3. Highly expressed in lung, spleen and thymus. Also detected at lower levels in heart, kidney, liver, lung, skeletal muscle, testes, uterus and ovaries.

It localises to the endoplasmic reticulum membrane. Does not have 2'-5'-OAS activity, but can bind double-stranded RNA. The full-length protein displays antiviral activity against flaviviruses such as west Nile virus (WNV) via an alternative antiviral pathway independent of RNase L. The truncated form of the protein lacks antiviral activity. This Mus musculus (Mouse) protein is Inactive 2'-5'-oligoadenylate synthase 1B (Oas1b).